Here is a 162-residue protein sequence, read N- to C-terminus: Peptidyl-prolyl cis-trans isomerase (162 aa).

An N-acetylserine modification is found at Ser-2. The 157-residue stretch at 5–161 folds into the PPIase cyclophilin-type domain; that stretch reads YFDVEADGQP…ARIVVAKSGE (157 aa). Glycyl lysine isopeptide (Lys-Gly) (interchain with G-Cter in ubiquitin) cross-links involve residues Lys-29 and Lys-42. Thr-71 carries the phosphothreonine modification. Glycyl lysine isopeptide (Lys-Gly) (interchain with G-Cter in ubiquitin) cross-links involve residues Lys-123 and Lys-139. Residues Ser-142 and Ser-145 each carry the phosphoserine modification. Glycyl lysine isopeptide (Lys-Gly) (interchain with G-Cter in ubiquitin) cross-links involve residues Lys-151 and Lys-158.

This sequence belongs to the cyclophilin-type PPIase family. PPIase A subfamily. Interacts with a complex composed of SIN3 and RPD3. Identified in the Set3C complex with HOS2, HST1, SNT1, SIF2, HOS4/YIL112W and SET3.

The protein localises to the cytoplasm. It is found in the nucleus. The protein resides in the mitochondrion intermembrane space. The catalysed reaction is [protein]-peptidylproline (omega=180) = [protein]-peptidylproline (omega=0). Binds cyclosporin A (CsA). CsA mediates some of its effects via an inhibitory action on PPIase. In terms of biological role, PPIases accelerate the folding of proteins. It catalyzes the cis-trans isomerization of proline imidic peptide bonds in oligopeptides. Involved in histone deacetylase complexes, suggesting a function in chromatin. Imports fructose-1,6-bisphosphatase (FBPase) into the intermediate vacuole import and degradation (Vid) vesicles. Regulates the meiotic gene program via the Set3C histone deacetylase complex to promote efficient sporulation, and the prolyl-isomerase activity is required for this function. This is Peptidyl-prolyl cis-trans isomerase (CPR1) from Saccharomyces cerevisiae (strain ATCC 204508 / S288c) (Baker's yeast).